Reading from the N-terminus, the 856-residue chain is MRVKEKYQHLWRWGWRWGTMLLGMLMICSATEKLWVTVYYGVPVWKEATTTLFCASDAKAYDTEVHNVWATHACVPTDPNPQEVVLVNVTENFNMWKNDMVEQMHEDIISLWDQSLKPCVKLTPLCVSLKCTDLKNDTNTNSSSGRMIMEKGEIKNCSFNISTSIRGKVQKEYAFFYKLDIIPIDNDTTSYKLTSCNTSVITQACPKVSFEPIPIHYCAPAGFAILKCNNKTFNGTGPCTNVSTVQCTHGIRPVVSTQLLLNGSLAEEEVVIRSVNFTDNAKTIIVQLNTSVEINCTRPNNNTRKRIRIQRGPGRAFVTIGKIGNMRQAHCNISRAKWNNTLKQIASKLREQFGNNKTIIFKQSSGGDPEIVTHSFNCGGEFFYCNSTQLFNSTWFNSTWSTEGSNNTEGSDTITLPCRIKQIINMWQKVGKAMYAPPISGQIRCSSNITGLLLTRDGGNSNNESEIFRPGGGDMRDNWRSELYKYKVVKIEPLGVAPTKAKRRVVQREKRAVGIGALFLGFLGAAGSTMGAASMTLTVQARQLLSGIVQQQNNLLRAIEAQQHLLQLTVWGIKQLQARILAVERYLKDQQLLGIWGCSGKLICTTAVPWNASWSNKSLEQIWNHTTWMEWDREINNYTSLIHSLIEESQNQQEKNEQELLELDKWASLWNWFNITNWLWYIKLFIMIVGGLVGLRIVFAVLSIVNRVRQGYSPLSFQTHLPTPRGPDRPEGIEEEGGERDRDRSIRLVNGSLALIWDDLRSLCLFSYHRLRDLLLIVTRIVELLGRRGWEALKYWWNLLQYWSQELKNSAVSLLNATAIAVAEGTDRVIEVVQGACRAIRHIPRRIRQGLERILL.

Residues 1–32 (MRVKEKYQHLWRWGWRWGTMLLGMLMICSATE) form the signal peptide. The Extracellular portion of the chain corresponds to 33-684 (KLWVTVYYGV…ITNWLWYIKL (652 aa)). A disulfide bond links Cys54 and Cys74. N-linked (GlcNAc...) asparagine; by host glycans are attached at residues Asn88, Asn136, Asn141, Asn156, Asn160, Asn186, Asn197, Asn230, Asn234, Asn241, Asn262, Asn276, Asn289, Asn295, Asn301, Asn332, Asn339, and Asn356. 5 disulfide bridges follow: Cys119-Cys205, Cys126-Cys196, Cys131-Cys157, Cys218-Cys247, and Cys228-Cys239. The tract at residues 131 to 156 (CTDLKNDTNTNSSSGRMIMEKGEIKN) is V1. Residues 157 to 196 (CSFNISTSIRGKVQKEYAFFYKLDIIPIDNDTTSYKLTSC) form a V2 region. Residues 296 to 330 (CTRPNNNTRKRIRIQRGPGRAFVTIGKIGNMRQAH) are V3. Cys296 and Cys331 form a disulfide bridge. Residues 364–374 (SSGGDPEIVTH) are CD4-binding loop. 2 disulfide bridges follow: Cys378–Cys445 and Cys385–Cys418. The V4 stretch occupies residues 385–418 (CNSTQLFNSTWFNSTWSTEGSNNTEGSDTITLPC). Residues Asn386, Asn392, Asn397, Asn406, Asn448, and Asn463 are each glycosylated (N-linked (GlcNAc...) asparagine; by host). V5 stretches follow at residues 461–471 (SNNESEIFRPG) and 463–471 (NESEIFRPG). The segment at 512 to 532 (AVGIGALFLGFLGAAGSTMGA) is fusion peptide. An immunosuppression region spans residues 574-592 (KQLQARILAVERYLKDQQL). Cysteines 598 and 604 form a disulfide. 5 N-linked (GlcNAc...) asparagine; by host glycosylation sites follow: Asn611, Asn616, Asn624, Asn637, and Asn674. Residues 633 to 667 (REINNYTSLIHSLIEESQNQQEKNEQELLELDKWA) adopt a coiled-coil conformation. The segment at 662 to 683 (ELDKWASLWNWFNITNWLWYIK) is MPER; binding to GalCer. A helical membrane pass occupies residues 685–705 (FIMIVGGLVGLRIVFAVLSIV). Over 706 to 856 (NRVRQGYSPL…IRQGLERILL (151 aa)) the chain is Cytoplasmic. A YXXL motif; contains endocytosis signal motif is present at residues 712 to 715 (YSPL). Residues 718–742 (QTHLPTPRGPDRPEGIEEEGGERDR) are disordered. 2 S-palmitoyl cysteine; by host lipidation sites follow: Cys764 and Cys837. Residues 855-856 (LL) carry the Di-leucine internalization motif motif.

The protein belongs to the HIV-1 env protein family. In terms of assembly, the mature envelope protein (Env) consists of a homotrimer of non-covalently associated gp120-gp41 heterodimers. The resulting complex protrudes from the virus surface as a spike. There seems to be as few as 10 spikes on the average virion. Interacts with host CD4, CCR5 and CXCR4. Gp120 also interacts with the C-type lectins CD209/DC-SIGN and CLEC4M/DC-SIGNR (collectively referred to as DC-SIGN(R)). Gp120 and gp41 interact with GalCer. Gp120 interacts with host ITGA4/ITGB7 complex; on CD4+ T-cells, this interaction results in rapid activation of integrin ITGAL/LFA-1, which facilitates efficient cell-to-cell spreading of HIV-1. Gp120 interacts with cell-associated heparan sulfate; this interaction increases virus infectivity on permissive cells and may be involved in infection of CD4- cells. As to quaternary structure, the mature envelope protein (Env) consists of a homotrimer of non-covalently associated gp120-gp41 heterodimers. The resulting complex protrudes from the virus surface as a spike. There seems to be as few as 10 spikes on the average virion. Post-translationally, palmitoylation of the transmembrane protein and of Env polyprotein (prior to its proteolytic cleavage) is essential for their association with host cell membrane lipid rafts. Palmitoylation is therefore required for envelope trafficking to classical lipid rafts, but not for viral replication. In terms of processing, highly glycosylated by host. The high number of glycan on the protein is reffered to as 'glycan shield' because it contributes to hide protein sequence from adaptive immune system. Specific enzymatic cleavages in vivo yield mature proteins. Envelope glycoproteins are synthesized as an inactive precursor that is heavily N-glycosylated and processed likely by host cell furin in the Golgi to yield the mature SU and TM proteins. The cleavage site between SU and TM requires the minimal sequence [KR]-X-[KR]-R. About 2 of the 9 disulfide bonds of gp41 are reduced by P4HB/PDI, following binding to CD4 receptor.

It is found in the virion membrane. Its subcellular location is the host cell membrane. It localises to the host endosome membrane. In terms of biological role, oligomerizes in the host endoplasmic reticulum into predominantly trimers. In a second time, gp160 transits in the host Golgi, where glycosylation is completed. The precursor is then proteolytically cleaved in the trans-Golgi and thereby activated by cellular furin or furin-like proteases to produce gp120 and gp41. Its function is as follows. Attaches the virus to the host lymphoid cell by binding to the primary receptor CD4. This interaction induces a structural rearrangement creating a high affinity binding site for a chemokine coreceptor like CXCR4 and/or CCR5. Acts as a ligand for CD209/DC-SIGN and CLEC4M/DC-SIGNR, which are respectively found on dendritic cells (DCs), and on endothelial cells of liver sinusoids and lymph node sinuses. These interactions allow capture of viral particles at mucosal surfaces by these cells and subsequent transmission to permissive cells. HIV subverts the migration properties of dendritic cells to gain access to CD4+ T-cells in lymph nodes. Virus transmission to permissive T-cells occurs either in trans (without DCs infection, through viral capture and transmission), or in cis (following DCs productive infection, through the usual CD4-gp120 interaction), thereby inducing a robust infection. In trans infection, bound virions remain infectious over days and it is proposed that they are not degraded, but protected in non-lysosomal acidic organelles within the DCs close to the cell membrane thus contributing to the viral infectious potential during DCs' migration from the periphery to the lymphoid tissues. On arrival at lymphoid tissues, intact virions recycle back to DCs' cell surface allowing virus transmission to CD4+ T-cells. Functionally, acts as a class I viral fusion protein. Under the current model, the protein has at least 3 conformational states: pre-fusion native state, pre-hairpin intermediate state, and post-fusion hairpin state. During fusion of viral and target intracellular membranes, the coiled coil regions (heptad repeats) assume a trimer-of-hairpins structure, positioning the fusion peptide in close proximity to the C-terminal region of the ectodomain. The formation of this structure appears to drive apposition and subsequent fusion of viral and target cell membranes. Complete fusion occurs in host cell endosomes and is dynamin-dependent, however some lipid transfer might occur at the plasma membrane. The virus undergoes clathrin-dependent internalization long before endosomal fusion, thus minimizing the surface exposure of conserved viral epitopes during fusion and reducing the efficacy of inhibitors targeting these epitopes. Membranes fusion leads to delivery of the nucleocapsid into the cytoplasm. In Homo sapiens (Human), this protein is Envelope glycoprotein gp160.